The following is a 789-amino-acid chain: ATP-dependent 6-phosphofructokinase (789 aa).

The tract at residues 1–404 (MSLKRNIRRL…NLETYKLLTK (404 aa)) is N-terminal catalytic PFK domain 1. Residues glycine 41, 104–105 (RC), and 134–137 (GDGS) each bind ATP. Residue aspartate 135 participates in Mg(2+) binding. Substrate is bound by residues 180 to 182 (SID), arginine 217, 224 to 226 (MGR), glutamate 280, arginine 307, and 313 to 316 (HVQR). The active-site Proton acceptor is aspartate 182. The interval 405 to 419 (LRTVEKDNLSGGQNF) is interdomain linker. The C-terminal regulatory PFK domain 2 stretch occupies residues 420-789 (NVAVMNVGAP…EAMEDTEDYD (370 aa)). Beta-D-fructose 2,6-bisphosphate is bound by residues lysine 489, 547 to 551 (TISNN), arginine 585, 592 to 594 (MGG), glutamate 647, arginine 673, 679 to 682 (HAQQ), and arginine 753.

This sequence belongs to the phosphofructokinase type A (PFKA) family. ATP-dependent PFK group I subfamily. Eukaryotic two domain clade 'E' sub-subfamily. Homotetramer. Mg(2+) is required as a cofactor.

The protein resides in the cytoplasm. The catalysed reaction is beta-D-fructose 6-phosphate + ATP = beta-D-fructose 1,6-bisphosphate + ADP + H(+). The protein operates within carbohydrate degradation; glycolysis; D-glyceraldehyde 3-phosphate and glycerone phosphate from D-glucose: step 3/4. Its activity is regulated as follows. Allosterically activated by ADP, AMP, or fructose 2,6-bisphosphate, and allosterically inhibited by ATP or citrate. Catalyzes the phosphorylation of D-fructose 6-phosphate to fructose 1,6-bisphosphate by ATP, the first committing step of glycolysis. The chain is ATP-dependent 6-phosphofructokinase (PFK) from Haemonchus contortus (Barber pole worm).